A 453-amino-acid polypeptide reads, in one-letter code: Phosphoglucosamine mutase (453 aa).

S108 (phosphoserine intermediate) is an active-site residue. Residues S108, D247, D249, and D251 each coordinate Mg(2+). Position 108 is a phosphoserine (S108).

The protein belongs to the phosphohexose mutase family. The cofactor is Mg(2+). Activated by phosphorylation.

The catalysed reaction is alpha-D-glucosamine 1-phosphate = D-glucosamine 6-phosphate. In terms of biological role, catalyzes the conversion of glucosamine-6-phosphate to glucosamine-1-phosphate. The polypeptide is Phosphoglucosamine mutase (Methylobacillus flagellatus (strain ATCC 51484 / DSM 6875 / VKM B-1610 / KT)).